The sequence spans 544 residues: Inosine-5'-monophosphate dehydrogenase (544 aa).

CBS domains are found at residues F132 to S192 and M194 to S250. Residues D288–S290 and G338–G340 each bind NAD(+). The K(+) site is built by G340 and G342. IMP is bound at residue S343. Position 345 (C345) interacts with K(+). The active-site Thioimidate intermediate is the C345. Residues D378–G380, G401–G402, and Y425–G429 each bind IMP. R458 serves as the catalytic Proton acceptor. Residue Q470 participates in IMP binding. The K(+) site is built by E529, G530, and G531.

This sequence belongs to the IMPDH/GMPR family. Homotetramer. The cofactor is K(+).

The protein resides in the cytoplasm. The enzyme catalyses IMP + NAD(+) + H2O = XMP + NADH + H(+). The protein operates within purine metabolism; XMP biosynthesis via de novo pathway; XMP from IMP: step 1/1. With respect to regulation, mycophenolic acid (MPA) is a non-competitive inhibitor that prevents formation of the closed enzyme conformation by binding to the same site as the amobile flap. In contrast, mizoribine monophosphate (MZP) is a competitive inhibitor that induces the closed conformation. MPA is a potent inhibitor of mammalian IMPDHs but a poor inhibitor of the bacterial enzymes. MZP is a more potent inhibitor of bacterial IMPDH. Its function is as follows. Catalyzes the conversion of inosine 5'-phosphate (IMP) to xanthosine 5'-phosphate (XMP), the first committed and rate-limiting step in the de novo synthesis of guanine nucleotides, and therefore plays an important role in the regulation of cell growth. The sequence is that of Inosine-5'-monophosphate dehydrogenase from Cryptococcus neoformans var. neoformans serotype D (strain JEC21 / ATCC MYA-565) (Filobasidiella neoformans).